Reading from the N-terminus, the 623-residue chain is Heterogeneous nuclear ribonucleoprotein Q (623 aa).

Ala-2 is modified (N-acetylalanine). Ser-159 carries the post-translational modification Phosphoserine. RRM domains follow at residues 162 to 241 (TEIF…ISVA), 243 to 325 (NRLF…WADP), and 338 to 408 (KVLF…FAKP). Lys-168 participates in a covalent cross-link: Glycyl lysine isopeptide (Lys-Gly) (interchain with G-Cter in SUMO2). N6-acetyllysine is present on Lys-221. An N6-acetyllysine modification is found at Lys-363. Tyr-373 carries the post-translational modification Phosphotyrosine. An interaction with APOBEC1 region spans residues 400-561 (NIEIVFAKPP…GARGGRGGNV (162 aa)). Arg-444 carries the asymmetric dimethylarginine; by PRMT1; alternate modification. At Arg-444 the chain carries Omega-N-methylarginine; by PRMT1; alternate. Tandem repeats lie at residues 448 to 450 (RGG), 451 to 453 (RGG), 460 to 464 (YYGYE), 469 to 472 (YYGY), 478 to 480 (RGG), and 485 to 488 (YYGY). The segment at 448 to 559 (RGGRGGYGYP…VRGARGGRGG (112 aa)) is 8 X 3 AA repeats of R-G-G. Positions 460 to 488 (YYGYEDYYDYYGYDYHNYRGGYEDPYYGY) are 3 X 4 AA repeats of Y-Y-G-Y. An Omega-N-methylarginine; by PRMT1 modification is found at Arg-496. Positions 497–623 (GRGGRGARGA…YQDTFGQQWK (127 aa)) are disordered. One copy of the 1-4 repeat lies at 498 to 500 (RGG). Low complexity predominate over residues 504–522 (RGAAPSRGRGAAPPRGRAG). Residue Arg-510 is modified to Asymmetric dimethylarginine; by PRMT1. Arg-518 is modified (asymmetric dimethylarginine; by PRMT1; alternate). Arg-518 is modified (omega-N-methylarginine; by PRMT1; alternate). Residues 518 to 549 (RGRAGYSQRGGPGSARGVRGARGGAQQQRGRG) form an interaction with SMN region. Arg-526 bears the Asymmetric dimethylarginine; alternate mark. At Arg-526 the chain carries Omega-N-methylarginine; alternate. The stretch at 526-528 (RGG) is one 1-5 repeat. Residues Arg-536 and Arg-539 each carry the asymmetric dimethylarginine; by PRMT1; alternate modification. Omega-N-methylarginine; by PRMT1; alternate occurs at positions 536 and 539. 3 consecutive repeat copies span residues 539–541 (RGG), 554–556 (RGG), and 557–559 (RGG). A compositionally biased stretch (gly residues) spans 550-562 (VRGARGGRGGNVG). The Bipartite nuclear localization signal signature appears at 564 to 578 (KRKADGYNQPDTKRR). Positions 580-595 (TNNQNWGSQPIAQQPL) are enriched in polar residues. Ser-587 is modified (phosphoserine). A Glycyl lysine isopeptide (Lys-Gly) (interchain with G-Cter in SUMO2) cross-link involves residue Lys-607. Residues 611–623 (QEFYQDTFGQQWK) are compositionally biased toward polar residues.

In terms of assembly, identified in the spliceosome C complex. Component of the coding region determinant (CRD)-mediated complex, composed of DHX9, HNRNPU, IGF2BP1, SYNCRIP and YBX1. Identified in a mRNP complex, at least composed of DHX9, DDX3X, ELAVL1, HNRNPU, IGF2BP1, ILF3, PABPC1, PCBP2, PTBP2, STAU1, STAU2, SYNCRIP and YBX1. Identified in a mRNP granule complex, at least composed of ACTB, ACTN4, DHX9, ERG, HNRNPA1, HNRNPA2B1, HNRNPAB, HNRNPD, HNRNPL, HNRNPR, HNRNPU, HSPA1, HSPA8, IGF2BP1, ILF2, ILF3, NCBP1, NCL, PABPC1, PABPC4, PABPN1, RPLP0, RPS3, RPS3A, RPS4X, RPS8, RPS9, SYNCRIP, YBX1 and untranslated mRNAs. Interacts with GTPBP1. Isoform 1 is a component of the APOB mRNA editosome complex. Isoform 1 interacts with APOBEC1 and A1CF. Part of a complex associated with the FOS mCRD domain and consisting of PABPC1, PAIP1, CSDE1/UNR, HNRPD and SYNCRIP. Isoform 2 interacts with HNRPR. Interacts with POLR2A hyperphosphorylated C-terminal domain. Interacts with HABP4. Identified in a histone pre-mRNA complex, at least composed of ERI1, LSM11, SLBP, SNRPB, SYNCRIP and YBX1. Isoform 1 and isoform 2 interact with SMN. Isoform 2 interacts through its C-terminal domain with SYT7, SYT8 and SYT9. The non-phosphorylated and phosphorylated forms are colocalized with PAIP1 in polysomes. Phosphorylated on tyrosine. The membrane-bound form found in microsomes is phosphorylated in vitro by insulin receptor tyrosine kinase (INSR). Phosphorylation is inhibited upon binding to RNA, whereas the cytoplasmic form is poorly phosphorylated. Ubiquitous. Detected in heart, brain, spleen, lung, liver, skeletal muscle, adipocytes, kidney and testis.

It is found in the nucleus. The protein resides in the nucleoplasm. It localises to the microsome. The protein localises to the cytoplasm. Functionally, heterogeneous nuclear ribonucleoprotein (hnRNP) implicated in mRNA processing mechanisms. Component of the CRD-mediated complex that promotes MYC mRNA stability. Isoform 1 and isoform 2 are associated in vitro with pre-mRNA, splicing intermediates and mature mRNA protein complexes. Isoform 1 binds to apoB mRNA AU-rich sequences. Isoform 1 is part of the APOB mRNA editosome complex and may modulate the postranscriptional C to U RNA-editing of the APOB mRNA through either by binding to A1CF (APOBEC1 complementation factor), to APOBEC1 or to RNA itself. May be involved in translationally coupled mRNA turnover. Implicated with other RNA-binding proteins in the cytoplasmic deadenylation/translational and decay interplay of the FOS mRNA mediated by the major coding-region determinant of instability (mCRD) domain. Interacts in vitro preferentially with poly(A) and poly(U) RNA sequences. Isoform 2 may be involved in cytoplasmic vesicle-based mRNA transport through interaction with synaptotagmins. This chain is Heterogeneous nuclear ribonucleoprotein Q (Syncrip), found in Mus musculus (Mouse).